A 305-amino-acid chain; its full sequence is UDP-3-O-acyl-N-acetylglucosamine deacetylase (305 aa).

Zn(2+) contacts are provided by histidine 79, histidine 238, and aspartate 242. The active-site Proton donor is the histidine 265.

The protein belongs to the LpxC family. The cofactor is Zn(2+).

The catalysed reaction is a UDP-3-O-[(3R)-3-hydroxyacyl]-N-acetyl-alpha-D-glucosamine + H2O = a UDP-3-O-[(3R)-3-hydroxyacyl]-alpha-D-glucosamine + acetate. Its pathway is glycolipid biosynthesis; lipid IV(A) biosynthesis; lipid IV(A) from (3R)-3-hydroxytetradecanoyl-[acyl-carrier-protein] and UDP-N-acetyl-alpha-D-glucosamine: step 2/6. Its function is as follows. Catalyzes the hydrolysis of UDP-3-O-myristoyl-N-acetylglucosamine to form UDP-3-O-myristoylglucosamine and acetate, the committed step in lipid A biosynthesis. This Vibrio cholerae serotype O1 (strain ATCC 39541 / Classical Ogawa 395 / O395) protein is UDP-3-O-acyl-N-acetylglucosamine deacetylase.